Here is a 188-residue protein sequence, read N- to C-terminus: RxLR effector protein Avh241 (188 aa).

Positions 1–16 (MRQYCLLLIVLALAAA) are cleaved as a signal peptide. Positions 43–58 (RLLRSEPQDEDTFEDR) match the RxLR-dEER motif. The Host plasma membrane localization motif motif lies at 73–78 (GAAKAK).

This sequence belongs to the RxLR effector family.

It is found in the secreted. The protein resides in the host cell membrane. In terms of biological role, effector that triggers cell death in a variety of plant species (including tobacco, tomato and soybean), regardless of the Rps genes present. Avh241 interacts with the plant immune system via at least two different mechanisms, one recognized by plants dependent on subcellular localization and one promoting infection independent on membrane localization. The cell death triggered by Avh241 in N.benthamiana requires the two host mitogen-activated protein kinases, MEK2 and WIPK. The protein is RxLR effector protein Avh241 of Phytophthora sojae (strain P6497) (Soybean stem and root rot agent).